Here is a 1396-residue protein sequence, read N- to C-terminus: DNA-directed RNA polymerase subunit beta' (1396 aa).

Zn(2+) is bound by residues C73, C75, C88, and C91. D467, D469, and D471 together coordinate Mg(2+). Positions 817, 891, 898, and 901 each coordinate Zn(2+).

This sequence belongs to the RNA polymerase beta' chain family. As to quaternary structure, the RNAP catalytic core consists of 2 alpha, 1 beta, 1 beta' and 1 omega subunit. When a sigma factor is associated with the core the holoenzyme is formed, which can initiate transcription. Mg(2+) serves as cofactor. It depends on Zn(2+) as a cofactor.

The enzyme catalyses RNA(n) + a ribonucleoside 5'-triphosphate = RNA(n+1) + diphosphate. Functionally, DNA-dependent RNA polymerase catalyzes the transcription of DNA into RNA using the four ribonucleoside triphosphates as substrates. The polypeptide is DNA-directed RNA polymerase subunit beta' (Orientia tsutsugamushi (strain Ikeda) (Rickettsia tsutsugamushi)).